The primary structure comprises 385 residues: GPN-loop GTPase 1 (385 aa).

13–18 (GSGKTT) is a GTP binding site. The Gly-Pro-Asn (GPN)-loop; involved in dimer interface motif lies at 70-72 (GPN). GTP is bound at residue 173–176 (NKTD). Residues Ser304, Ser308, and Ser313 each carry the phosphoserine modification. Over residues 317–332 (EDANDGLVDRDEDEGV) the composition is skewed to acidic residues. Positions 317-356 (EDANDGLVDRDEDEGVEREYTFPGEERTKGEVNENSAPDL) are disordered. Residues 333 to 348 (EREYTFPGEERTKGEV) are compositionally biased toward basic and acidic residues. Ser352 is modified (phosphoserine). Residue Lys369 forms a Glycyl lysine isopeptide (Lys-Gly) (interchain with G-Cter in ubiquitin) linkage.

It belongs to the GPN-loop GTPase family. In terms of assembly, heterodimers with GPN2 or GPN3. Binds to RNA polymerase II (RNAPII) in a GTP-dependent manner. Interacts with nuclear pore protein NUP133 and nuclear export factor CRM1. Interacts with PCL1. Phosphorylated by the cyclin-CDK PCL1-PHO85.

The protein localises to the cytoplasm. Small GTPase required for proper nuclear import of RNA polymerase II (RNAPII). May act at an RNAP assembly step prior to nuclear import. Promotes sister chromatid separation during anaphase. The polypeptide is GPN-loop GTPase 1 (Saccharomyces cerevisiae (strain ATCC 204508 / S288c) (Baker's yeast)).